The chain runs to 495 residues: NADH-ubiquinone oxidoreductase chain 4 (495 aa).

The next 12 membrane-spanning stretches (helical) occupy residues 9 to 29, 39 to 59, 89 to 109, 118 to 138, 173 to 193, 214 to 234, 245 to 265, 272 to 292, 335 to 355, 367 to 387, 413 to 433, and 457 to 477; these read YFNL…LLFI, LIGL…WIQF, ISLF…LVGW, EYII…CMLD, FFLY…LILF, IFLW…VPVH, PTAG…YGFL, FPEA…IAII, ILLM…VGVL, YGGL…FTLA, LVAT…LWLY, and VFIF…PKVF.

It belongs to the complex I subunit 4 family. In terms of assembly, complex I is composed of at least 49 different subunits.

Its subcellular location is the mitochondrion inner membrane. The enzyme catalyses a ubiquinone + NADH + 5 H(+)(in) = a ubiquinol + NAD(+) + 4 H(+)(out). Functionally, core subunit of the mitochondrial membrane respiratory chain NADH dehydrogenase (Complex I) that is believed to belong to the minimal assembly required for catalysis. Complex I functions in the transfer of electrons from NADH to the respiratory chain. The immediate electron acceptor for the enzyme is believed to be ubiquinone. The protein is NADH-ubiquinone oxidoreductase chain 4 (ND4) of Arabidopsis thaliana (Mouse-ear cress).